A 344-amino-acid polypeptide reads, in one-letter code: Heme A synthase (344 aa).

Helical transmembrane passes span 20–40 (IAWW…VGGL), 104–124 (RFLG…FVVT), 135–155 (LIFL…MVMS), 170–190 (AHLG…LDLL), 205–225 (AAAI…VAGI), 233–253 (TWPL…TPVW), 265–285 (FQHR…WWAA), 296–316 (WLAV…LWVV), and 317–337 (PIPL…VAVW). Histidine 267 provides a ligand contact to heme. Residue histidine 324 participates in heme binding.

The protein belongs to the COX15/CtaA family. Type 2 subfamily. In terms of assembly, interacts with CtaB. Requires heme b as cofactor.

It localises to the cell membrane. It carries out the reaction Fe(II)-heme o + 2 A + H2O = Fe(II)-heme a + 2 AH2. It functions in the pathway porphyrin-containing compound metabolism; heme A biosynthesis; heme A from heme O: step 1/1. Catalyzes the conversion of heme O to heme A by two successive hydroxylations of the methyl group at C8. The first hydroxylation forms heme I, the second hydroxylation results in an unstable dihydroxymethyl group, which spontaneously dehydrates, resulting in the formyl group of heme A. The chain is Heme A synthase from Parvibaculum lavamentivorans (strain DS-1 / DSM 13023 / NCIMB 13966).